We begin with the raw amino-acid sequence, 331 residues long: L-lactate dehydrogenase A chain (331 aa).

Residues 29–57 (GMVGMASAISILLKDLCDELAMVDVMEDK) and R98 contribute to the NAD(+) site. R105, N137, and R168 together coordinate substrate. NAD(+) is bound at residue N137. H192 acts as the Proton acceptor in catalysis. Residue T247 coordinates substrate.

It belongs to the LDH/MDH superfamily. LDH family. In terms of assembly, homotetramer.

Its subcellular location is the cytoplasm. It carries out the reaction (S)-lactate + NAD(+) = pyruvate + NADH + H(+). Its pathway is fermentation; pyruvate fermentation to lactate; (S)-lactate from pyruvate: step 1/1. Its function is as follows. Interconverts simultaneously and stereospecifically pyruvate and lactate with concomitant interconversion of NADH and NAD(+). This chain is L-lactate dehydrogenase A chain (ldha), found in Notothenia angustata (Rockcod).